The sequence spans 156 residues: Endoribonuclease YbeY (156 aa).

The Zn(2+) site is built by histidine 114, histidine 118, and histidine 124.

This sequence belongs to the endoribonuclease YbeY family. It depends on Zn(2+) as a cofactor.

Its subcellular location is the cytoplasm. In terms of biological role, single strand-specific metallo-endoribonuclease involved in late-stage 70S ribosome quality control and in maturation of the 3' terminus of the 16S rRNA. This Sodalis glossinidius (strain morsitans) protein is Endoribonuclease YbeY.